Consider the following 174-residue polypeptide: UPF0316 protein lin1888 (174 aa).

3 helical membrane-spanning segments follow: residues 4–24 (GIFI…IYTV), 36–56 (LAAL…SLVL), and 62–82 (IANV…GMKI).

Belongs to the UPF0316 family.

The protein localises to the cell membrane. The polypeptide is UPF0316 protein lin1888 (Listeria innocua serovar 6a (strain ATCC BAA-680 / CLIP 11262)).